Here is a 499-residue protein sequence, read N- to C-terminus: Lysine--tRNA ligase (499 aa).

Residues Glu-407 and Glu-414 each contribute to the Mg(2+) site.

Belongs to the class-II aminoacyl-tRNA synthetase family. In terms of assembly, homodimer. It depends on Mg(2+) as a cofactor.

Its subcellular location is the cytoplasm. It catalyses the reaction tRNA(Lys) + L-lysine + ATP = L-lysyl-tRNA(Lys) + AMP + diphosphate. This is Lysine--tRNA ligase from Lactiplantibacillus plantarum (strain ATCC BAA-793 / NCIMB 8826 / WCFS1) (Lactobacillus plantarum).